A 152-amino-acid chain; its full sequence is SsrA-binding protein (152 aa).

The protein belongs to the SmpB family.

The protein localises to the cytoplasm. In terms of biological role, required for rescue of stalled ribosomes mediated by trans-translation. Binds to transfer-messenger RNA (tmRNA), required for stable association of tmRNA with ribosomes. tmRNA and SmpB together mimic tRNA shape, replacing the anticodon stem-loop with SmpB. tmRNA is encoded by the ssrA gene; the 2 termini fold to resemble tRNA(Ala) and it encodes a 'tag peptide', a short internal open reading frame. During trans-translation Ala-aminoacylated tmRNA acts like a tRNA, entering the A-site of stalled ribosomes, displacing the stalled mRNA. The ribosome then switches to translate the ORF on the tmRNA; the nascent peptide is terminated with the 'tag peptide' encoded by the tmRNA and targeted for degradation. The ribosome is freed to recommence translation, which seems to be the essential function of trans-translation. The polypeptide is SsrA-binding protein (Rickettsia rickettsii).